The sequence spans 184 residues: Ribosome maturation factor RimM (184 aa).

In terms of domain architecture, PRC barrel spans 101–174; it reads PDEYYDHQLV…RVVIADRPGL (74 aa).

The protein belongs to the RimM family. In terms of assembly, binds ribosomal protein uS19.

The protein localises to the cytoplasm. An accessory protein needed during the final step in the assembly of 30S ribosomal subunit, possibly for assembly of the head region. Essential for efficient processing of 16S rRNA. May be needed both before and after RbfA during the maturation of 16S rRNA. It has affinity for free ribosomal 30S subunits but not for 70S ribosomes. This Nocardioides sp. (strain ATCC BAA-499 / JS614) protein is Ribosome maturation factor RimM.